A 93-amino-acid chain; its full sequence is Defensin-like protein 210 (93 aa).

An N-terminal signal peptide occupies residues 1–19 (MKTIILFLTLLVISSSCTS). 3 cysteine pairs are disulfide-bonded: cysteine 63/cysteine 80, cysteine 66/cysteine 85, and cysteine 70/cysteine 87.

It belongs to the DEFL family.

The protein localises to the secreted. The protein is Defensin-like protein 210 of Arabidopsis thaliana (Mouse-ear cress).